Consider the following 330-residue polypeptide: GMP reductase (330 aa).

Cysteine 180 serves as the catalytic Thioimidate intermediate. Residue 209–232 (LIADGGIRHNGDIAKSVRFGASMV) coordinates NADP(+).

This sequence belongs to the IMPDH/GMPR family. GuaC type 2 subfamily.

It catalyses the reaction IMP + NH4(+) + NADP(+) = GMP + NADPH + 2 H(+). In terms of biological role, catalyzes the irreversible NADPH-dependent deamination of GMP to IMP. It functions in the conversion of nucleobase, nucleoside and nucleotide derivatives of G to A nucleotides, and in maintaining the intracellular balance of A and G nucleotides. The chain is GMP reductase from Lactobacillus gasseri (strain ATCC 33323 / DSM 20243 / BCRC 14619 / CIP 102991 / JCM 1131 / KCTC 3163 / NCIMB 11718 / NCTC 13722 / AM63).